Reading from the N-terminus, the 118-residue chain is UPF0102 protein Bcav_2532 (118 aa).

Belongs to the UPF0102 family.

In Beutenbergia cavernae (strain ATCC BAA-8 / DSM 12333 / CCUG 43141 / JCM 11478 / NBRC 16432 / NCIMB 13614 / HKI 0122), this protein is UPF0102 protein Bcav_2532.